The chain runs to 357 residues: Holliday junction branch migration complex subunit RuvB (357 aa).

The interval Met-1–Ile-20 is disordered. A large ATPase domain (RuvB-L) region spans residues Met-1–Tyr-185. Residues Leu-24, Arg-25, Gly-66, Lys-69, Thr-70, Ser-71, Glu-132–Phe-134, Arg-175, Tyr-185, and Arg-222 each bind ATP. Thr-70 contributes to the Mg(2+) binding site. The tract at residues Glu-186–Asp-256 is small ATPAse domain (RuvB-S). A head domain (RuvB-H) region spans residues Thr-259–Asp-357. DNA is bound by residues Arg-314 and Arg-319.

This sequence belongs to the RuvB family. In terms of assembly, homohexamer. Forms an RuvA(8)-RuvB(12)-Holliday junction (HJ) complex. HJ DNA is sandwiched between 2 RuvA tetramers; dsDNA enters through RuvA and exits via RuvB. An RuvB hexamer assembles on each DNA strand where it exits the tetramer. Each RuvB hexamer is contacted by two RuvA subunits (via domain III) on 2 adjacent RuvB subunits; this complex drives branch migration. In the full resolvosome a probable DNA-RuvA(4)-RuvB(12)-RuvC(2) complex forms which resolves the HJ.

The protein localises to the cytoplasm. It catalyses the reaction ATP + H2O = ADP + phosphate + H(+). Functionally, the RuvA-RuvB-RuvC complex processes Holliday junction (HJ) DNA during genetic recombination and DNA repair, while the RuvA-RuvB complex plays an important role in the rescue of blocked DNA replication forks via replication fork reversal (RFR). RuvA specifically binds to HJ cruciform DNA, conferring on it an open structure. The RuvB hexamer acts as an ATP-dependent pump, pulling dsDNA into and through the RuvAB complex. RuvB forms 2 homohexamers on either side of HJ DNA bound by 1 or 2 RuvA tetramers; 4 subunits per hexamer contact DNA at a time. Coordinated motions by a converter formed by DNA-disengaged RuvB subunits stimulates ATP hydrolysis and nucleotide exchange. Immobilization of the converter enables RuvB to convert the ATP-contained energy into a lever motion, pulling 2 nucleotides of DNA out of the RuvA tetramer per ATP hydrolyzed, thus driving DNA branch migration. The RuvB motors rotate together with the DNA substrate, which together with the progressing nucleotide cycle form the mechanistic basis for DNA recombination by continuous HJ branch migration. Branch migration allows RuvC to scan DNA until it finds its consensus sequence, where it cleaves and resolves cruciform DNA. This Nocardia farcinica (strain IFM 10152) protein is Holliday junction branch migration complex subunit RuvB.